The primary structure comprises 1103 residues: Ubiquitin carboxyl-terminal hydrolase 7 (1103 aa).

Positions 1–11 (MNHQQQQQQQQ) are enriched in low complexity. The tract at residues 1–40 (MNHQQQQQQQQKAGEQQLSEPEDMEMEAGDTDDPPRITQN) is disordered. The segment at 1 to 209 (MNHQQQQQQQ…APHGVAWDSK (209 aa)) is interaction with TSPYL5. At Ser19 the chain carries Phosphoserine. Residues 20–32 (EPEDMEMEAGDTD) are compositionally biased toward acidic residues. Ser50 and Ser54 each carry phosphoserine. Residues 54 to 209 (SNAEEDMEDD…APHGVAWDSK (156 aa)) form an interaction with p53/TP53 and MDM2 region. The region spanning 69 to 196 (EATFQFTVER…DDKVTFEVFV (128 aa)) is the MATH domain. Residues 71-206 (TFQFTVERFS…QADAPHGVAW (136 aa)) form a necessary for nuclear localization region. Residues 215 to 522 (VGLKNQGATC…NAYMLVYIRE (308 aa)) form the USP domain. The active-site Nucleophile is Cys224. His465 functions as the Proton acceptor in the catalytic mechanism. Lys870 carries the post-translational modification N6-acetyllysine; alternate. Lys870 participates in a covalent cross-link: Glycyl lysine isopeptide (Lys-Gly) (interchain with G-Cter in SUMO2); alternate. Lys870 participates in a covalent cross-link: Glycyl lysine isopeptide (Lys-Gly) (interchain with G-Cter in ubiquitin); alternate. A Glycyl lysine isopeptide (Lys-Gly) (interchain with G-Cter in SUMO2) cross-link involves residue Lys883. Ser964 carries the phosphoserine modification. N6-acetyllysine occurs at positions 1085 and 1097.

The protein belongs to the peptidase C19 family. Monomer. Homodimer. Part of a complex with DAXX, MDM2, RASSF1 and USP7. Part of a complex with DAXX, MDM2 and USP7. Interacts with MDM2; the interaction is independent of p53/TP53. Interacts with DAXX; the interaction is direct and independent of MDM2 and p53/TP53. Component of a complex composed of KMT2E, OGT and USP7; the complex stabilizes KMT2E, preventing KMT2E ubiquitination and proteasomal-mediated degradation. Interacts (via MATH domain) with KMT2E. Interacts with OGT. Interacts with FOXO4; the interaction is enhanced in presence of hydrogen peroxide and occurs independently of p53/TP53. Interacts with p53/TP53; the interaction is enhanced in response to DNA damage; the interaction is impaired by TSPYL5. Interacts with PTEN; the interaction is direct. Interacts with ATXN1 and the strength of interaction is influenced by the length of the poly-Gln region in ATXN1. A weaker interaction seen with mutants having longer poly-Gln regions. Interacts with KIAA1530/UVSSA. Interacts with MEX3C and antagonizes its ability to degrade mRNA. Interacts with DNMT1 and UHRF1. Interacts with FOXP3. Interacts (via MATH domain) with RNF220. Associated component of the Polycomb group (PcG) multiprotein PRC1-like complex. Interacts with EPOP. Interacts with OTUD4 and USP9X; the interaction is direct. Interacts with CRY2. Interacts with REST. Interacts with ERCC6. Part of a complex consisting of USP7, MAGEL2 and TRIM27; directly interacts with MAGEL2; directly interacts with TRIM27. Post-translationally, polyneddylated. Not sumoylated. In terms of processing, ubiquitinated at Lys-870. Polyubiquitinated. Strongly expressed in the testis, spleen and brain. Weakly expressed in the stomach, small intestine, skeletal muscle and uterus.

It localises to the nucleus. The protein localises to the cytoplasm. It is found in the PML body. Its subcellular location is the chromosome. The catalysed reaction is Thiol-dependent hydrolysis of ester, thioester, amide, peptide and isopeptide bonds formed by the C-terminal Gly of ubiquitin (a 76-residue protein attached to proteins as an intracellular targeting signal).. Hydrolase that deubiquitinates target proteins such as ARMC5, FOXO4, DEPTOR, KAT5, p53/TP53, MDM2, ERCC6, DNMT1, UHRF1, PTEN, KMT2E/MLL5 and DAXX. Together with DAXX, prevents MDM2 self-ubiquitination and enhances the E3 ligase activity of MDM2 towards p53/TP53, thereby promoting p53/TP53 ubiquitination and proteasomal degradation. Deubiquitinates p53/TP53, preventing degradation of p53/TP53, and enhances p53/TP53-dependent transcription regulation, cell growth repression and apoptosis. Deubiquitinates p53/TP53 and MDM2 and strongly stabilizes p53/TP53 even in the presence of excess MDM2, and also induces p53/TP53-dependent cell growth repression and apoptosis. Deubiquitination of FOXO4 in presence of hydrogen peroxide is not dependent on p53/TP53 and inhibits FOXO4-induced transcriptional activity. In association with DAXX, is involved in the deubiquitination and translocation of PTEN from the nucleus to the cytoplasm, both processes that are counteracted by PML. Deubiquitinates KMT2E preventing KMT2E proteasomal-mediated degradation. Involved in cell proliferation during early embryonic development. Involved in transcription-coupled nucleotide excision repair (TC-NER) in response to UV damage: recruited to DNA damage sites following interaction with KIAA1530/UVSSA and promotes deubiquitination of ERCC6, preventing UV-induced degradation of ERCC6. Involved in maintenance of DNA methylation via its interaction with UHRF1 and DNMT1: acts by mediating deubiquitination of UHRF1 and DNMT1, preventing their degradation and promoting DNA methylation by DNMT1. Deubiquitinates alkylation repair enzyme ALKBH3. OTUD4 recruits USP7 and USP9X to stabilize ALKBH3, thereby promoting the repair of alkylated DNA lesions. Acts as a chromatin regulator via its association with the Polycomb group (PcG) multiprotein PRC1-like complex; may act by deubiquitinating components of the PRC1-like complex. Able to mediate deubiquitination of histone H2B; it is however unsure whether this activity takes place in vivo. Exhibits a preference towards 'Lys-48'-linked ubiquitin chains. Increases regulatory T-cells (Treg) suppressive capacity by deubiquitinating and stabilizing transcription factor FOXP3 which is crucial for Treg cell function. Plays a role in the maintenance of the circadian clock periodicity via deubiquitination and stabilization of the CRY1 and CRY2 proteins. Deubiquitinates REST, thereby stabilizing REST and promoting the maintenance of neural progenitor cells. Deubiquitinates SIRT7, inhibiting SIRT7 histone deacetylase activity and regulating gluconeogenesis. Involved in the regulation of WASH-dependent actin polymerization at the surface of endosomes and the regulation of endosomal protein recycling. It maintains optimal WASH complex activity and precise F-actin levels via deubiquitination of TRIM27 and WASHC1. Mediates the deubiquitination of phosphorylated DEPTOR, promoting its stability and leading to decreased mTORC1 signaling. The polypeptide is Ubiquitin carboxyl-terminal hydrolase 7 (Usp7) (Rattus norvegicus (Rat)).